A 303-amino-acid polypeptide reads, in one-letter code: Glucose-1-phosphate thymidylyltransferase (303 aa).

Mg(2+) contacts are provided by D108 and D222.

The protein belongs to the glucose-1-phosphate thymidylyltransferase family. The cofactor is Mg(2+).

It carries out the reaction dTTP + alpha-D-glucose 1-phosphate + H(+) = dTDP-alpha-D-glucose + diphosphate. Catalyzes the formation of dTDP-glucose, from dTTP and glucose 1-phosphate, as well as its pyrophosphorolysis. Its function is as follows. Probably involved in the biosynthesis of the acarviose moiety of the alpha-glucosidase inhibitor acarbose. The sequence is that of Glucose-1-phosphate thymidylyltransferase (acbA) from Actinoplanes sp. (strain ATCC 31044 / CBS 674.73 / SE50/110).